The following is a 649-amino-acid chain: Probable cyclic nucleotide-gated ion channel 12 (649 aa).

Topologically, residues Met1–Thr43 are cytoplasmic. The helical transmembrane segment at Val44–Ile64 threads the bilayer. Residues Asp65–Thr76 lie on the Extracellular side of the membrane. Residues Leu77–Ile97 form a helical membrane-spanning segment. Residues Tyr98–Arg128 lie on the Cytoplasmic side of the membrane. The helical transmembrane segment at Leu129–Leu149 threads the bilayer. Residues Thr150–Arg162 are Extracellular-facing. Residues Ile163–Tyr183 traverse the membrane as a helical segment. Over Lys184–Gly200 the chain is Cytoplasmic. The helical transmembrane segment at Ala201–Leu221 threads the bilayer. At Ser222 to Gly329 the chain is on the extracellular side. The helical transmembrane segment at Glu330 to Gly350 threads the bilayer. The Cytoplasmic segment spans residues Asn351–Ala649. A nucleoside 3',5'-cyclic phosphate is bound by residues Leu436–Leu559 and Glu507. Residues Leu545–Tyr560 are calmodulin-binding. Residues Arg565–Pro594 enclose the IQ domain. A disordered region spans residues Arg618–Ala649. Residues Lys638 to Ala649 show a composition bias toward basic and acidic residues.

It belongs to the cyclic nucleotide-gated cation channel (TC 1.A.1.5) family. In terms of assembly, homotetramer or heterotetramer.

Its subcellular location is the cell membrane. Probable cyclic nucleotide-gated ion channel. The protein is Probable cyclic nucleotide-gated ion channel 12 (CNGC12) of Arabidopsis thaliana (Mouse-ear cress).